The following is a 632-amino-acid chain: Armadillo repeat-containing X-linked protein 2 (632 aa).

Over 1–6 (MSRVRD) the chain is Mitochondrial intermembrane. The mitochondrion outer membrane (MOM)-targeting sequence stretch occupies residues 1-6 (MSRVRD). A helical; Signal-anchor membrane pass occupies residues 7–25 (AGCVAAGIVIGAGAWYCVY). The tract at residues 26–40 (KYTRGRDQTKKRMAK) is mitochondrion outer membrane (MOM)-targeting sequence. Over 26–632 (KYTRGRDQTK…VKVIKLVNKF (607 aa)) the chain is Cytoplasmic. Disordered stretches follow at residues 68–124 (GFSP…AGVG), 160–304 (APKV…KVEV), and 335–369 (VPDS…RPVA). 2 stretches are compositionally biased toward low complexity: residues 86-120 (EASA…EADG) and 211-241 (VASP…SPGT). A compositionally biased stretch (acidic residues) spans 336–356 (PDSEEGESGWTDTESDSDSEP). ARM repeat units follow at residues 376–416 (PYEI…NNAN), 418–457 (SCNQ…NLSE), and 498–537 (ITND…NFAE).

Belongs to the eutherian X-chromosome-specific Armcx family. In terms of tissue distribution, expressed at high levels ovary, heart, testis, prostate, brain, spleen and colon. Expressed at very low levels in liver and thymus. Not expressed in peripheral blood leukocytes. Not expressed in pancreas and ovarian carcinomas.

It is found in the mitochondrion. The protein localises to the mitochondrion outer membrane. Functionally, may regulate the dynamics and distribution of mitochondria in neural cells. The protein is Armadillo repeat-containing X-linked protein 2 (ARMCX2) of Homo sapiens (Human).